Reading from the N-terminus, the 465-residue chain is Purple acid phosphatase 2 (465 aa).

An N-terminal signal peptide occupies residues 1 to 32; it reads MGASRTGCYLLAVVLAAVMNAAIAGITSSFIR. Asn110 and Asn138 each carry an N-linked (GlcNAc...) asparagine glycan. Asp164 contributes to the Fe cation binding site. Asn172 carries an N-linked (GlcNAc...) asparagine glycan. Residues Asp193 and Tyr196 each contribute to the Fe cation site. Asp193 contacts Mn(2+). Asn230 contacts Mn(2+). Asn230 is a binding site for substrate. The N-linked (GlcNAc...) asparagine glycan is linked to Asn303. Residue His315 participates in Mn(2+) binding. His325 functions as the Proton donor in the catalytic mechanism. His352 provides a ligand contact to Mn(2+). A substrate-binding site is contributed by 352 to 354; sequence HVH. Position 354 (His354) interacts with Fe cation. Asn400 and Asn425 each carry an N-linked (GlcNAc...) asparagine glycan.

It belongs to the metallophosphoesterase superfamily. Purple acid phosphatase family. In terms of assembly, homodimer; disulfide-linked. Fe cation is required as a cofactor. The cofactor is Mn(2+). Requires Zn(2+) as cofactor. It depends on Cu(2+) as a cofactor. Mg(2+) serves as cofactor.

The protein localises to the secreted. It catalyses the reaction a phosphate monoester + H2O = an alcohol + phosphate. The chain is Purple acid phosphatase 2 (PAP2) from Ipomoea batatas (Sweet potato).